Here is a 205-residue protein sequence, read N- to C-terminus: Holliday junction branch migration complex subunit RuvA (205 aa).

Residues 1 to 64 form a domain I region; that stretch reads MIGRLKGILI…ENLHQLFGFA (64 aa). A domain II region spans residues 65 to 143; the sequence is EQRDRSLFRT…NWDLPQGDML (79 aa). The flexible linker stretch occupies residues 144 to 153; that stretch reads AHGEIQAIAS. The segment at 153–205 is domain III; it reads SDNDIYAEAESALIALGYKPVDAAKMVASAAKQKPEARSEELIRIALRSLAGV.

The protein belongs to the RuvA family. Homotetramer. Forms an RuvA(8)-RuvB(12)-Holliday junction (HJ) complex. HJ DNA is sandwiched between 2 RuvA tetramers; dsDNA enters through RuvA and exits via RuvB. An RuvB hexamer assembles on each DNA strand where it exits the tetramer. Each RuvB hexamer is contacted by two RuvA subunits (via domain III) on 2 adjacent RuvB subunits; this complex drives branch migration. In the full resolvosome a probable DNA-RuvA(4)-RuvB(12)-RuvC(2) complex forms which resolves the HJ.

The protein localises to the cytoplasm. Its function is as follows. The RuvA-RuvB-RuvC complex processes Holliday junction (HJ) DNA during genetic recombination and DNA repair, while the RuvA-RuvB complex plays an important role in the rescue of blocked DNA replication forks via replication fork reversal (RFR). RuvA specifically binds to HJ cruciform DNA, conferring on it an open structure. The RuvB hexamer acts as an ATP-dependent pump, pulling dsDNA into and through the RuvAB complex. HJ branch migration allows RuvC to scan DNA until it finds its consensus sequence, where it cleaves and resolves the cruciform DNA. This chain is Holliday junction branch migration complex subunit RuvA, found in Cellvibrio japonicus (strain Ueda107) (Pseudomonas fluorescens subsp. cellulosa).